The sequence spans 625 residues: Grainyhead-like protein 2 homolog (625 aa).

The interval 1 to 93 (MSQESDNNKR…KASDSQEDQD (93 aa)) is transcription activation. Disordered regions lie at residues 198-222 (ASHSSYLKDDQRSTPDSTYSESFKD) and 428-452 (EERKQNRKKGKGQASQAQCNNSSDG). The Grh/CP2 DB domain maps to 244-482 (GSGTFQYTLE…DLHSQPVLFI (239 aa)). The span at 440 to 451 (QASQAQCNNSSD) shows a compositional bias: polar residues.

This sequence belongs to the grh/CP2 family. Grainyhead subfamily. As to quaternary structure, homodimer, also forms heterodimers with GRHL1 or GRHL3.

It localises to the nucleus. The protein resides in the membrane. Its function is as follows. Transcription factor playing an important role in primary neurulation and in epithelial development. Binds directly to the consensus DNA sequence 5'-AACCGGTT-3' acting as an activator and repressor on distinct target genes. During embryogenesis, plays unique and cooperative roles with GRHL3 in establishing distinct zones of primary neurulation. Essential for closure 3 (rostral end of the forebrain), functions cooperatively with GRHL3 in closure 2 (forebrain/midbrain boundary) and posterior neuropore closure. Regulates epithelial morphogenesis acting as a target gene-associated transcriptional activator of apical junctional complex components. Up-regulates of CLDN3 and CLDN4, as well as of RAB25, which increases the CLDN4 protein and its localization at tight junctions. Comprises an essential component of the transcriptional machinery that establishes appropriate expression levels of CLDN4 and CDH1 in different types of epithelia. Exhibits functional redundancy with GRHL3 in epidermal morphogenetic events such as eyelid fusion and epidermal wound repair. In lung, forms a regulatory loop with NKX2-1 that coordinates lung epithelial cell morphogenesis and differentiation. In keratinocytes, plays a role in telomerase activation during cellular proliferation, regulates TERT expression by binding to TERT promoter region and inhibiting DNA methylation at the 5'-CpG island, possibly by interfering with DNMT1 enzyme activity. In addition, impairs keratinocyte differentiation and epidermal function by inhibiting the expression of genes clustered at the epidermal differentiation complex (EDC) as well as GRHL1 and GRHL3 through epigenetic mechanisms. This is Grainyhead-like protein 2 homolog (Grhl2) from Mus musculus (Mouse).